Reading from the N-terminus, the 341-residue chain is DER1-like family member protein 1 (341 aa).

At 1–41 the chain is on the cytoplasmic side; sequence MAGPRNVRTLHGNGGRNNDVMGPKEFWLNIPPITRTLFTLA. Residues 42 to 62 traverse the membrane as a helical segment; the sequence is IVMTIVGRLNLINPWYFIYVW. The Lumenal segment spans residues 63-122; sequence NLTFKKVQIWRLLTSCVMLSSRAMPALMELYSIYDRSSQLERGHFGPGLSNRRGPMVTVD. Residues 123-143 traverse the membrane as a helical segment; sequence YAYYLCFCILAITTATTIIYG. Residues 144–170 are Cytoplasmic-facing; the sequence is SYYPVVLTSGFISCITYTWSIDNANVQ. The helical transmembrane segment at 171-191 threads the bilayer; it reads IMFYGLIPVWGKYFPLIQLFI. A topological domain (lumenal) is located at residue S192. A helical transmembrane segment spans residues 193-213; sequence FVFNEGDFVISLIGFTTGYLY. The Cytoplasmic segment spans residues 214 to 341; the sequence is TCLDTHTLGP…GQTNSPSDSQ (128 aa). Polar residues-rich tracts occupy residues 276–286 and 296–341; these read SSQRETRTFSG and ATLS…SDSQ. The disordered stretch occupies residues 276–341; sequence SSQRETRTFS…GQTNSPSDSQ (66 aa).

It belongs to the derlin family.

It is found in the endoplasmic reticulum membrane. Functionally, may be involved in the degradation process of some misfolded endoplasmic reticulum (ER) luminal proteins. Its precise role is however unclear and its inability to complement der1 mutations, suggests either that it is not involved in degradation process of misfolded proteins, or that it participates in the destruction of specific misfolded ER luminal proteins. The chain is DER1-like family member protein 1 (DFM1) from Saccharomyces cerevisiae (strain ATCC 204508 / S288c) (Baker's yeast).